Consider the following 124-residue polypeptide: Large ribosomal subunit protein bL12 (124 aa).

It belongs to the bacterial ribosomal protein bL12 family. In terms of assembly, homodimer. Part of the ribosomal stalk of the 50S ribosomal subunit. Forms a multimeric L10(L12)X complex, where L10 forms an elongated spine to which 2 to 4 L12 dimers bind in a sequential fashion. Binds GTP-bound translation factors.

Functionally, forms part of the ribosomal stalk which helps the ribosome interact with GTP-bound translation factors. Is thus essential for accurate translation. In Xanthobacter autotrophicus (strain ATCC BAA-1158 / Py2), this protein is Large ribosomal subunit protein bL12.